Reading from the N-terminus, the 474-residue chain is PRAME family member 17 (474 aa).

The stretch at 97–124 (RWKLQVLDLRDVDGNFWTIWSGARALSC) is one LRR 1; degenerate repeat. Residues 179 to 203 (HLCCNKVQNYSMPTSSFRNLLKRVY) form an LRR 2; degenerate repeat. An LRR 3; degenerate repeat occupies 204–230 (PDSIQELEIKRKCSLNKTGKFAPYLSQ). An LRR 4; degenerate repeat occupies 231-265 (MSNLRKLFLAFGYDDELYVSGQQQFVPDLDCPFLC). LRR repeat units follow at residues 266 to 291 (LYYPQMLYIRKISNIKEHLEHLLRCL), 292 to 323 (KNPLGTFIFCHAYLADQDMECLSQYPSLSQLK), 324 to 342 (ELHLIHILMWTTNLEPLGA), 348 to 375 (AATLEILTLKDCQIQDSQLRVLLPALSR), and 376 to 400 (CSQLTTFYFRGNETSTNALKDLLCH).

Belongs to the PRAME family.

In Homo sapiens (Human), this protein is PRAME family member 17.